We begin with the raw amino-acid sequence, 807 residues long: Tyrosine-protein phosphatase non-receptor type 22 (807 aa).

The region spanning 24 to 289 is the Tyrosine-protein phosphatase domain; the sequence is FANEFLKLKR…ELVYNAVLEL (266 aa). Serine 35 is subject to Phosphoserine; by PKC/PRKCD. A disulfide bridge connects residues cysteine 129 and cysteine 227. Cysteine 227 serves as the catalytic Phosphocysteine intermediate. Residues 227 to 233 and glutamine 274 each bind substrate; that span reads CSAGCGR. Phosphoserine is present on residues serine 449, serine 635, serine 684, and serine 692. Disordered regions lie at residues 676–700 and 724–746; these read SVKL…LPER and SYPD…GKSF.

Belongs to the protein-tyrosine phosphatase family. Non-receptor class 4 subfamily. As to quaternary structure, interacts with CSK. Interacts with LPXN. Interacts with CBL. Interacts with TRAF3 (via MATH domain); the interaction promotes TRAF3 polyubiquitination. Post-translationally, phosphorylation on Ser-35 by PKC/PRKCD abrogates its ability to dephosphorylate and inactivate the SRC family kinases. Expressed in bone marrow, B and T-cells, PBMCs, natural killer cells, monocytes, dendritic cells and neutrophils. Both isoform 1 and 4 are predominantly expressed in lymphoid tissues and cells. Isoform 1 is expressed in thymocytes and both mature B and T-cells.

It is found in the cytoplasm. It catalyses the reaction O-phospho-L-tyrosyl-[protein] + H2O = L-tyrosyl-[protein] + phosphate. It carries out the reaction N-(5Z,8Z,11Z,14Z-eicosatetraenoyl)-ethanolamine phosphate + H2O = N-(5Z,8Z,11Z,14Z-eicosatetraenoyl)-ethanolamine + phosphate. Its activity is regulated as follows. Down-regulated by phosphorylation. Its function is as follows. Acts as a negative regulator of T-cell receptor (TCR) signaling by direct dephosphorylation of the Src family kinases LCK and FYN, ITAMs of the TCRz/CD3 complex, as well as ZAP70, VAV, VCP and other key signaling molecules. Associates with and probably dephosphorylates CBL. Dephosphorylates LCK at its activating 'Tyr-394' residue. Dephosphorylates ZAP70 at its activating 'Tyr-493' residue. Dephosphorylates the immune system activator SKAP2. Positively regulates toll-like receptor (TLR)-induced type 1 interferon production. Promotes host antiviral responses mediated by type 1 interferon. Regulates NOD2-induced pro-inflammatory cytokine secretion and autophagy. Acts as an activator of NLRP3 inflammasome assembly by mediating dephosphorylation of 'Tyr-861' of NLRP3. Dephosphorylates phospho-anandamide (p-AEA), an endocannabinoid to anandamide (also called N-arachidonoylethanolamide). The chain is Tyrosine-protein phosphatase non-receptor type 22 (PTPN22) from Homo sapiens (Human).